The sequence spans 332 residues: RING finger protein 225 (332 aa).

The tract at residues 1–55 (MPCPRLPWLRRHRTSQGSGPSSPSTVSAPNSPSRGEDEDAEEEEGDGTPGSGPIL) is disordered. Residues 15–27 (SQGSGPSSPSTVS) are compositionally biased toward low complexity. Residues 36 to 46 (EDEDAEEEEGD) show a composition bias toward acidic residues. An RING-type zinc finger spans residues 63–111 (CLICVSPFDGIFKLPKRLDCGHVFCLECLARLSLATAGGGDAVACPMCR). A disordered region spans residues 121–187 (GLPALPTQPG…PPPLRLGRPL (67 aa)). Residues 205-225 (ALAVLVAAGLVVSGVYIFFLI) form a helical membrane-spanning segment. The disordered stretch occupies residues 259–332 (THAWTRRPTK…ADGKKVQLQQ (74 aa)). Composition is skewed to basic and acidic residues over residues 280–295 (ATKD…KDPV) and 323–332 (ADGKKVQLQQ).

The protein resides in the membrane. The chain is RING finger protein 225 from Mus musculus (Mouse).